The primary structure comprises 103 residues: Secreted LysM effector Mgx1LysM (103 aa).

A signal peptide spans 1–18 (MKVTTIIAALLSVAVVDA). 2 disulfides stabilise this stretch: Cys31–Cys89 and Cys62–Cys97. Residues 37–85 (IPYVVKKGDTLTHIAHDIYKRKVGICDLAYTNHIGYNPDLIYEDQTLLI) form the LysM domain. Residues Gly44, Thr48, Asp75, and Ile77 each contribute to the chitin site.

Belongs to the secreted LysM effector family. Forms homodimers in a chitin-independent manner through interactions at the N-termini of Mgx1LysM monomers. Homodimers are further polymerized in a chitin-dependent manner.

Its subcellular location is the secreted. It is found in the cell wall. Secreted effector that enables the plant pathogenic fungus to manipulate host defenses for successful infection. Binds chitin and suppresses the chitin-induced reactive oxygen species (ROS) burst. Chitin-induced polymerization of homodimers forms a contiguous Mg1LysM highly oligomeric super-complexe that is anchored to the chitin in the fungal cell wall to prevent hydrolysis by host chitinases. In Zymoseptoria tritici (strain CBS 115943 / IPO323) (Speckled leaf blotch fungus), this protein is Secreted LysM effector Mgx1LysM.